We begin with the raw amino-acid sequence, 689 residues long: MTQQTFLVEIGTEELPPKALRSLAEAFAANFTAELDSANLEHGEVSWFAAPRRLALKVANLSAAQADREVEKRGPAIAQAFDAEGKPSKAAEGWARGCGITVDQAERLVTDKGEWLLYRAHVKGQSAQALLAGMVSNSLAKLPIPKLMRWGDSDVQFVRPVHTVTMLLGAELIPGTVLGIDSARTVRGHRFMGEAEFTIDNADQYPQILLERGKVIADYETRKAMIKRDAELAASTIGGKADLSESLLEEVASLVEWPVVLTAKFEEKFLAVPAEALVYTMKGDQKYFPVYDAAGKLLPNFIFVANIESKDPQQIISGNEKVVRPRLADAEFFFNTDRKKRLEDNLPRLETVLFQQQLGTLRDKTDRIQALAGWVAGQIGADVNHATRAGLLSKCDLMTNMVFEFTDTQGVMGMHYARHDGEAEDVAVALNEQYQPRFAGDALPESLVACSLAIADKMDTLAGIFGIGQHPKGDKDPFALRRAALGVLRIIVEKNLTLDLQTLTEEAVRLYGSKLTNAKVVDEVVEFMLGRFRAWYQEEGHAVDTIQAVLARRPTKPADFDARVKAVTHFRTLEAAAALAAANKRVSNILAKSTDTLNDRVHASVLKEAAEIQLATHLVVLRDKLEPYFAAGNYQDALVELADLREPVDAFFDNVMVMAEDEAVRVNRLTLLSKLRELFLQVADISVLQ.

It belongs to the class-II aminoacyl-tRNA synthetase family. As to quaternary structure, tetramer of two alpha and two beta subunits.

It is found in the cytoplasm. It carries out the reaction tRNA(Gly) + glycine + ATP = glycyl-tRNA(Gly) + AMP + diphosphate. The polypeptide is Glycine--tRNA ligase beta subunit (Serratia proteamaculans (strain 568)).